We begin with the raw amino-acid sequence, 371 residues long: Chaperone protein DnaJ (371 aa).

The 65-residue stretch at 5–69 folds into the J domain; sequence DYYEVLGLSK…QKRAQYDQFG (65 aa). Residues 133–215 form a CR-type zinc finger; the sequence is GKELNVEIPV…CHGSGKVRKR (83 aa). Positions 146, 149, 163, 166, 189, 192, 203, and 206 each coordinate Zn(2+). CXXCXGXG motif repeat units lie at residues 146 to 153, 163 to 170, 189 to 196, and 203 to 210; these read CDTCKGSG, CKHCSGSG, CGHCSGTG, and CTTCHGSG.

The protein belongs to the DnaJ family. In terms of assembly, homodimer. Zn(2+) is required as a cofactor.

The protein resides in the cytoplasm. Its function is as follows. Participates actively in the response to hyperosmotic and heat shock by preventing the aggregation of stress-denatured proteins and by disaggregating proteins, also in an autonomous, DnaK-independent fashion. Unfolded proteins bind initially to DnaJ; upon interaction with the DnaJ-bound protein, DnaK hydrolyzes its bound ATP, resulting in the formation of a stable complex. GrpE releases ADP from DnaK; ATP binding to DnaK triggers the release of the substrate protein, thus completing the reaction cycle. Several rounds of ATP-dependent interactions between DnaJ, DnaK and GrpE are required for fully efficient folding. Also involved, together with DnaK and GrpE, in the DNA replication of plasmids through activation of initiation proteins. The chain is Chaperone protein DnaJ from Bacillus cereus (strain G9842).